Consider the following 309-residue polypeptide: Porphobilinogen deaminase (309 aa).

S-(dipyrrolylmethanemethyl)cysteine is present on Cys244.

This sequence belongs to the HMBS family. As to quaternary structure, monomer. It depends on dipyrromethane as a cofactor.

The enzyme catalyses 4 porphobilinogen + H2O = hydroxymethylbilane + 4 NH4(+). It functions in the pathway porphyrin-containing compound metabolism; protoporphyrin-IX biosynthesis; coproporphyrinogen-III from 5-aminolevulinate: step 2/4. Its function is as follows. Tetrapolymerization of the monopyrrole PBG into the hydroxymethylbilane pre-uroporphyrinogen in several discrete steps. This is Porphobilinogen deaminase from Listeria monocytogenes serovar 1/2a (strain ATCC BAA-679 / EGD-e).